The primary structure comprises 732 residues: Aldehyde oxidoreductase molybdenum-binding subunit PaoC (732 aa).

Residues 241 to 242 (GF), 468 to 470 (IGT), 511 to 512 (GA), 615 to 621 (RILNPKT), glutamine 625, and 688 to 691 (KGVG) contribute to the Mo-molybdopterin cytosine dinucleotide site. Glutamate 692 acts as the Proton acceptor in catalysis.

The protein belongs to the xanthine dehydrogenase family. In terms of assembly, heterotrimer composed of PaoA, PaoB and PaoC. The cofactor is Mo-molybdopterin cytosine dinucleotide.

The protein localises to the periplasm. It catalyses the reaction an aldehyde + A + H2O = a carboxylate + AH2 + H(+). Its function is as follows. Oxidizes aldehydes to the corresponding carboxylic acids with a preference for aromatic aldehydes. It might play a role in the detoxification of aldehydes to avoid cell damage. The polypeptide is Aldehyde oxidoreductase molybdenum-binding subunit PaoC (Escherichia coli O157:H7).